Consider the following 180-residue polypeptide: Large ribosomal subunit protein uL5 (180 aa).

This sequence belongs to the universal ribosomal protein uL5 family. As to quaternary structure, part of the 50S ribosomal subunit; part of the 5S rRNA/L5/L18/L25 subcomplex. Contacts the 5S rRNA and the P site tRNA. Forms a bridge to the 30S subunit in the 70S ribosome.

This is one of the proteins that bind and probably mediate the attachment of the 5S RNA into the large ribosomal subunit, where it forms part of the central protuberance. In the 70S ribosome it contacts protein S13 of the 30S subunit (bridge B1b), connecting the 2 subunits; this bridge is implicated in subunit movement. Contacts the P site tRNA; the 5S rRNA and some of its associated proteins might help stabilize positioning of ribosome-bound tRNAs. This Streptococcus equi subsp. equi (strain 4047) protein is Large ribosomal subunit protein uL5.